Reading from the N-terminus, the 293-residue chain is Indole-3-glycerol phosphate synthase (293 aa).

The protein belongs to the TrpC family.

It catalyses the reaction 1-(2-carboxyphenylamino)-1-deoxy-D-ribulose 5-phosphate + H(+) = (1S,2R)-1-C-(indol-3-yl)glycerol 3-phosphate + CO2 + H2O. Its pathway is amino-acid biosynthesis; L-tryptophan biosynthesis; L-tryptophan from chorismate: step 4/5. The sequence is that of Indole-3-glycerol phosphate synthase from Prochlorococcus marinus (strain SARG / CCMP1375 / SS120).